A 325-amino-acid polypeptide reads, in one-letter code: Lipoyl synthase (325 aa).

Residues cysteine 72, cysteine 77, cysteine 83, cysteine 98, cysteine 102, cysteine 105, and serine 312 each contribute to the [4Fe-4S] cluster site. In terms of domain architecture, Radical SAM core spans 84 to 301; the sequence is FAGGTATFMI…AEEGERMGFK (218 aa).

Belongs to the radical SAM superfamily. Lipoyl synthase family. Requires [4Fe-4S] cluster as cofactor.

The protein resides in the cytoplasm. It carries out the reaction [[Fe-S] cluster scaffold protein carrying a second [4Fe-4S](2+) cluster] + N(6)-octanoyl-L-lysyl-[protein] + 2 oxidized [2Fe-2S]-[ferredoxin] + 2 S-adenosyl-L-methionine + 4 H(+) = [[Fe-S] cluster scaffold protein] + N(6)-[(R)-dihydrolipoyl]-L-lysyl-[protein] + 4 Fe(3+) + 2 hydrogen sulfide + 2 5'-deoxyadenosine + 2 L-methionine + 2 reduced [2Fe-2S]-[ferredoxin]. Its pathway is protein modification; protein lipoylation via endogenous pathway; protein N(6)-(lipoyl)lysine from octanoyl-[acyl-carrier-protein]: step 2/2. Catalyzes the radical-mediated insertion of two sulfur atoms into the C-6 and C-8 positions of the octanoyl moiety bound to the lipoyl domains of lipoate-dependent enzymes, thereby converting the octanoylated domains into lipoylated derivatives. This Azotobacter vinelandii (strain DJ / ATCC BAA-1303) protein is Lipoyl synthase.